The primary structure comprises 220 residues: Probable nicotinate-nucleotide adenylyltransferase (220 aa).

This sequence belongs to the NadD family.

The catalysed reaction is nicotinate beta-D-ribonucleotide + ATP + H(+) = deamido-NAD(+) + diphosphate. It functions in the pathway cofactor biosynthesis; NAD(+) biosynthesis; deamido-NAD(+) from nicotinate D-ribonucleotide: step 1/1. Functionally, catalyzes the reversible adenylation of nicotinate mononucleotide (NaMN) to nicotinic acid adenine dinucleotide (NaAD). The polypeptide is Probable nicotinate-nucleotide adenylyltransferase (Yersinia pseudotuberculosis serotype O:1b (strain IP 31758)).